The sequence spans 155 residues: Interleukin-2 (155 aa).

The first 20 residues, 1–20 (MYKIQLLSCIALTLALVANG), serve as a signal peptide directing secretion. O-linked (GalNAc...) threonine glycosylation occurs at Thr23. A disulfide bridge connects residues Cys79 and Cys127.

This sequence belongs to the IL-2 family.

The protein resides in the secreted. Cytokine produced by activated CD4-positive helper T-cells and to a lesser extend activated CD8-positive T-cells and natural killer (NK) cells that plays pivotal roles in the immune response and tolerance. Binds to a receptor complex composed of either the high-affinity trimeric IL-2R (IL2RA/CD25, IL2RB/CD122 and IL2RG/CD132) or the low-affinity dimeric IL-2R (IL2RB and IL2RG). Interaction with the receptor leads to oligomerization and conformation changes in the IL-2R subunits resulting in downstream signaling starting with phosphorylation of JAK1 and JAK3. In turn, JAK1 and JAK3 phosphorylate the receptor to form a docking site leading to the phosphorylation of several substrates including STAT5. This process leads to activation of several pathways including STAT, phosphoinositide-3-kinase/PI3K and mitogen-activated protein kinase/MAPK pathways. Functions as a T-cell growth factor and can increase NK-cell cytolytic activity as well. Promotes strong proliferation of activated B-cells and subsequently immunoglobulin production. Plays a pivotal role in regulating the adaptive immune system by controlling the survival and proliferation of regulatory T-cells, which are required for the maintenance of immune tolerance. Moreover, participates in the differentiation and homeostasis of effector T-cell subsets, including Th1, Th2, Th17 as well as memory CD8-positive T-cells. The chain is Interleukin-2 (IL2) from Boselaphus tragocamelus (Nilgai).